The chain runs to 922 residues: Disintegrin and metalloproteinase domain-containing protein 10 homolog (922 aa).

Positions 1-26 (MSSPIRNRLQLVVTLIFCLFFENVNG) are cleaved as a signal peptide. Positions 27–228 (LNNFIDNFET…YMTMGGRSKR (202 aa)) are excised as a propeptide. 3 N-linked (GlcNAc...) asparagine glycosylation sites follow: Asn-74, Asn-185, and Asn-346. Topologically, residues 229–745 (ANTLRDHDGL…ETLTQWAQDN (517 aa)) are extracellular. The Peptidase M12B domain maps to 242–480 (RTCSLYMQAD…CSVKNISAVL (239 aa)). Residue His-426 participates in Zn(2+) binding. Glu-427 is an active-site residue. Residues His-430 and His-436 each coordinate Zn(2+). Cys-442 and Cys-471 are oxidised to a cystine. The N-linked (GlcNAc...) asparagine glycan is linked to Asn-475. In terms of domain architecture, Disintegrin spans 511 to 615 (SAFCGNQIYE…QCPVSPPKHD (105 aa)). Cystine bridges form between Cys-542/Cys-577, Cys-564/Cys-572, Cys-588/Cys-607, Cys-594/Cys-626, and Cys-619/Cys-631. N-linked (GlcNAc...) asparagine glycosylation is present at Asn-632. Disulfide bonds link Cys-636–Cys-659, Cys-644–Cys-665, Cys-655–Cys-707, and Cys-700–Cys-713. Asn-677 is a glycosylation site (N-linked (GlcNAc...) asparagine). Residues 746–766 (WWVVGVGGLVFLVIMALFVKC) traverse the membrane as a helical segment. Residues 767-922 (CAVHTPSTNP…SGNGGKKKGK (156 aa)) are Cytoplasmic-facing. Disordered regions lie at residues 797 to 837 (QHRQ…PSAP) and 864 to 922 (PGSS…KKGK). A compositionally biased stretch (low complexity) spans 805–834 (AAGSVPPGPGAQPRSGAASAPSRTTPSARP).

May interact with tetraspanin tsp-12; the interaction promotes sup-17 cell membrane localization. Zn(2+) serves as cofactor. Expressed in the germline.

The protein resides in the cell membrane. It localises to the basolateral cell membrane. It is found in the cytoplasmic vesicle membrane. It catalyses the reaction Endopeptidase of broad specificity.. Metalloprotease. Acts together with protease adm-4 and in a cell autonomous manner to facilitate lin-12/Notch signaling during developmental cell fate decision, including anchor cell/ventral uterine precursor cell decision and vulva precursor cell specification. By modulating glp-1/Notch signaling, plays a role in germline development. Probably by modulating BMP-like Sma/Mab signaling via the shedding of unc-40 ectodomain, involved in the regulation of body size and mesoderm development. Probably by shedding ephrin efn-4, regulates axon guidance of SDQL neuron during development. This Caenorhabditis elegans protein is Disintegrin and metalloproteinase domain-containing protein 10 homolog.